The following is a 529-amino-acid chain: 56 kDa type-specific antigen (529 aa).

A signal peptide spans 1–22 (MKKIMLIASAMSALSLPFSASA). The helical transmembrane segment at 67–87 (LTTSMPFGGTLAAGMTIAPGF) threads the bilayer. Residues 106–116 (GKTGSDADIRS) show a composition bias toward basic and acidic residues. Disordered stretches follow at residues 106-134 (GKTG…PQPT) and 392-424 (DGGC…KGKE). A helical transmembrane segment spans residues 477-492 (TGMVASGALGVAINAA).

The protein localises to the cell membrane. Its function is as follows. May be an adherent factor for rickettsial adsorption to the host-cell surface and a determinant of virulence of individual rickettsial strain. It is the major outer membrane protein. This Orientia tsutsugamushi (Rickettsia tsutsugamushi) protein is 56 kDa type-specific antigen.